An 879-amino-acid polypeptide reads, in one-letter code: Prostaglandin F2 receptor negative regulator (879 aa).

The signal sequence occupies residues 1 to 21 (MGRPAPRPLLLALLSLAVCRG). 2 consecutive Ig-like C2-type domains span residues 22 to 137 (RVVR…DTVQ) and 149 to 263 (PSSR…QEIQ). Residues 22-832 (RVVRVPAGTL…MDVLNAFKYP (811 aa)) lie on the Extracellular side of the membrane. 2 disulfide bridges follow: Cys-43–Cys-119 and Cys-169–Cys-247. N-linked (GlcNAc...) asparagine glycosylation occurs at Asn-44. The Cell attachment site motif lies at 89–91 (RGD). Position 271 is a phosphothreonine (Thr-271). 4 Ig-like C2-type domains span residues 276–389 (PTAL…WHKV), 406–536 (PEYQ…DVFS), 544–662 (ASED…AWSP), and 688–813 (PTFN…AEIH). Cysteines 299 and 373 form a disulfide. Residues Asn-300, Asn-383, and Asn-413 are each glycosylated (N-linked (GlcNAc...) asparagine). The Endoplasmic reticulum retention signal motif lies at 424-427 (PTEL). Cys-429 and Cys-515 are joined by a disulfide. 4 N-linked (GlcNAc...) asparagine glycosylation sites follow: Asn-525, Asn-600, Asn-618, and Asn-691. A disulfide bridge connects residues Cys-571 and Cys-655. Positions 703-705 (RGD) match the Cell attachment site motif. Cysteines 711 and 793 form a disulfide. The chain crosses the membrane as a helical span at residues 833–853 (LLIGVGLSTVIGLLSCLIGYC). Topologically, residues 854 to 879 (SSHWCCKKEVRETRRERRRLMSMEMD) are cytoplasmic.

Interacts with CD9 and CD81. Part of a complex composed of CD9, CD81 and IGSF8. Also seems to interact with CD63, CD82 and CD151. As to expression, expressed in myoblasts (at protein level).

The protein localises to the endoplasmic reticulum membrane. It localises to the golgi apparatus. Its subcellular location is the trans-Golgi network membrane. Its function is as follows. Inhibits the binding of prostaglandin F2-alpha (PGF2-alpha) to its specific FP receptor, by decreasing the receptor number rather than the affinity constant. Functional coupling with the prostaglandin F2-alpha receptor seems to occur. In myoblasts, associates with tetraspanins CD9 and CD81 to prevent myotube fusion during muscle regeneration. The chain is Prostaglandin F2 receptor negative regulator (Ptgfrn) from Mus musculus (Mouse).